The following is a 249-amino-acid chain: Sugar fermentation stimulation protein homolog (249 aa).

Belongs to the SfsA family.

The protein is Sugar fermentation stimulation protein homolog of Synechococcus sp. (strain CC9902).